Here is a 265-residue protein sequence, read N- to C-terminus: uncharacterized protein (265 aa).

The chain crosses the membrane as a helical span at residues 1-21 (MAFNNSTIIIIIVIAFAFFLI). 2 N-linked (GlcNAc...) asparagine; by host glycosylation sites follow: Asn-74 and Asn-142.

The protein localises to the host membrane. It is found in the virion. This is an uncharacterized protein from Acanthamoeba polyphaga mimivirus (APMV).